A 319-amino-acid polypeptide reads, in one-letter code: Cobalamin biosynthesis protein CobD (319 aa).

4 consecutive transmembrane segments (helical) span residues 56–76 (GLWI…LWLM), 153–173 (VDGV…LAMA), 204–224 (LANW…AWFI), and 290–310 (IPLS…LFAL).

It belongs to the CobD/CbiB family.

The protein resides in the cell membrane. It functions in the pathway cofactor biosynthesis; adenosylcobalamin biosynthesis. Converts cobyric acid to cobinamide by the addition of aminopropanol on the F carboxylic group. In Photorhabdus laumondii subsp. laumondii (strain DSM 15139 / CIP 105565 / TT01) (Photorhabdus luminescens subsp. laumondii), this protein is Cobalamin biosynthesis protein CobD.